Consider the following 116-residue polypeptide: Large ribosomal subunit protein bL19 (116 aa).

It belongs to the bacterial ribosomal protein bL19 family.

Functionally, this protein is located at the 30S-50S ribosomal subunit interface and may play a role in the structure and function of the aminoacyl-tRNA binding site. The polypeptide is Large ribosomal subunit protein bL19 (Syntrophomonas wolfei subsp. wolfei (strain DSM 2245B / Goettingen)).